We begin with the raw amino-acid sequence, 376 residues long: DNA double-strand break repair protein Mre11 (376 aa).

Mn(2+) contacts are provided by Asp-5, His-7, Asp-46, and Asp-81. Catalysis depends on His-82, which acts as the Proton donor. Mn(2+) is bound by residues His-159, His-189, and His-191.

It belongs to the MRE11/RAD32 family. Homodimer. Forms a heterotetramer composed of two Mre11 subunits and two Rad50 subunits. Mn(2+) serves as cofactor.

With respect to regulation, nuclease activity is regulated by Rad50. Functionally, part of the Rad50/Mre11 complex, which is involved in the early steps of DNA double-strand break (DSB) repair. The complex may facilitate opening of the processed DNA ends to aid in the recruitment of HerA and NurA. Mre11 binds to DSB ends and has both double-stranded 3'-5' exonuclease activity and single-stranded endonuclease activity. This Thermoplasma acidophilum (strain ATCC 25905 / DSM 1728 / JCM 9062 / NBRC 15155 / AMRC-C165) protein is DNA double-strand break repair protein Mre11.